A 138-amino-acid polypeptide reads, in one-letter code: Protein PsiE homolog (138 aa).

The next 4 helical transmembrane spans lie at 12–34, 56–76, 84–104, and 109–129; these read YLLQ…ALLI, YEML…ALII, HFPL…LIII, and AIST…FFIA.

It belongs to the PsiE family.

The protein localises to the cell membrane. The sequence is that of Protein PsiE homolog from Bacillus subtilis (strain 168).